A 310-amino-acid polypeptide reads, in one-letter code: Glycine-rich RNA-binding protein RZ1C (310 aa).

Residues 7–85 form the RRM domain; that stretch reads SRIFVGGLSP…RVISVNRAEP (79 aa). Position 15 is a phosphoserine (Ser15). Positions 82-120 are disordered; sequence RAEPKLGRDDGESHGSRGGRDSGYSIAGKGSFGGGGGGG. Residues 83 to 101 show a composition bias toward basic and acidic residues; it reads AEPKLGRDDGESHGSRGGR. The segment covering 111 to 120 has biased composition (gly residues); it reads GSFGGGGGGG. The CCHC-type zinc-finger motif lies at 128 to 143; the sequence is CFKCGRVGHWARDCPS. A disordered region spans residues 224–310; sequence RFAGGDRYSR…YPSSSTFDRY (87 aa). Basic and acidic residues-rich tracts occupy residues 226 to 236 and 244 to 253; these read AGGDRYSRGSD and DKARSFERDI. The segment covering 261 to 273 has biased composition (gly residues); sequence RYGGGRAGGPIRG. At Ser295 the chain carries Phosphoserine.

Expressed in roots, rosette and cauline leaves, stems, floral buds and flowers.

The protein resides in the nucleus. Functionally, binds RNA and DNA sequences non-specifically. May be involved in tolerance to cold stress. In Arabidopsis thaliana (Mouse-ear cress), this protein is Glycine-rich RNA-binding protein RZ1C.